We begin with the raw amino-acid sequence, 287 residues long: Endolytic peptidoglycan transglycosylase RlpA (287 aa).

The first 25 residues, 1 to 25 (MKLKTGLNLTALLLFMISVAFPAQA), serve as a signal peptide directing secretion. The SPOR domain maps to 209 to 284 (LKGTEFYCLK…ANNKPLIVYT (76 aa)).

It belongs to the RlpA family.

Its function is as follows. Lytic transglycosylase with a strong preference for naked glycan strands that lack stem peptides. The polypeptide is Endolytic peptidoglycan transglycosylase RlpA (Haemophilus influenzae (strain ATCC 51907 / DSM 11121 / KW20 / Rd)).